The following is a 797-amino-acid chain: Mitochondrial inner membrane m-AAA protease component AFG3L2 (797 aa).

The N-terminal 38 residues, 1–38 (MAHRCLRLWGRGGCWPRGLQQLLVPGGVGPGEQPCLRT), are a transit peptide targeting the mitochondrion. Residues 39-66 (LYRFVTTQARASRNSLLTDIIAAYQRFC) constitute a propeptide, removed in mature form. At 39 to 142 (LYRFVTTQAR…KGDIPWDDKD (104 aa)) the chain is on the mitochondrial matrix side. The interval 76–126 (YFPNGKNGKKASEPKEVMGEKKESKPAATTRSSGGGGGGGGKRGGKKDDSH) is disordered. Positions 85 to 100 (KASEPKEVMGEKKESK) are enriched in basic and acidic residues. A compositionally biased stretch (gly residues) spans 108-117 (SGGGGGGGGK). The residue at position 117 (Lys-117) is an N6-succinyllysine. A helical transmembrane segment spans residues 143-163 (FRMFFLWTALFWGGVMFYLLL). Over 164 to 250 (KRSGREITWK…VPVVYIAESD (87 aa)) the chain is Mitochondrial intermembrane. The helical transmembrane segment at 251-271 (GSFLLSMLPTVLIIAFLLYTI) threads the bilayer. The Mitochondrial matrix segment spans residues 272–797 (RRGPAGIGRT…EEPPGEKVAN (526 aa)). ATP contacts are provided by Val-310, Ala-311, Thr-352, Gly-353, Lys-354, Thr-355, Leu-356, and His-490. His-574 contributes to the Zn(2+) binding site. Residue Glu-575 is part of the active site. His-578 and Asp-649 together coordinate Zn(2+). The interval 759–797 (FVEGTGSLDEDTSLPEGLKDWNKEREKEKEEPPGEKVAN) is disordered. Residues 775-797 (GLKDWNKEREKEKEEPPGEKVAN) are compositionally biased toward basic and acidic residues.

In the N-terminal section; belongs to the AAA ATPase family. This sequence in the C-terminal section; belongs to the peptidase M41 family. Homohexamer. Forms heterohexamers with SPG7. The m-AAA protease is either composed of homohexamers of AFG3L2 or heterohexamers of AFG3L2 and SPG7. Interacts with MAIP1. Interacts with DNAJC19. Interacts with PHB2. The cofactor is Zn(2+). Upon import into the mitochondrion, the N-terminal transit peptide is cleaved to generate an intermediate form which undergoes autocatalytic proteolytic processing to generate the proteolytically active mature form. As to expression, ubiquitous. Highly expressed in the cerebellar Purkinje cells.

The protein resides in the mitochondrion inner membrane. It catalyses the reaction ATP + H2O = ADP + phosphate + H(+). Functionally, catalytic component of the m-AAA protease, a protease that plays a key role in proteostasis of inner mitochondrial membrane proteins, and which is essential for axonal and neuron development. AFG3L2 possesses both ATPase and protease activities: the ATPase activity is required to unfold substrates, threading them into the internal proteolytic cavity for hydrolysis into small peptide fragments. The m-AAA protease carries out quality control in the inner membrane of the mitochondria by mediating degradation of mistranslated or misfolded polypeptides. The m-AAA protease complex also promotes the processing and maturation of mitochondrial proteins, such as MRPL32/bL32m, PINK1 and SP7. Mediates protein maturation of the mitochondrial ribosomal subunit MRPL32/bL32m by catalyzing the cleavage of the presequence of MRPL32/bL32m prior to assembly into the mitochondrial ribosome. Required for SPG7 maturation into its active mature form after SPG7 cleavage by mitochondrial-processing peptidase (MPP). Required for the maturation of PINK1 into its 52kDa mature form after its cleavage by mitochondrial-processing peptidase (MPP). Acts as a regulator of calcium in neurons by mediating degradation of SMDT1/EMRE before its assembly with the uniporter complex, limiting the availability of SMDT1/EMRE for MCU assembly and promoting efficient assembly of gatekeeper subunits with MCU. Promotes the proteolytic degradation of GHITM upon hyperpolarization of mitochondria: progressive GHITM degradation leads to respiratory complex I degradation and broad reshaping of the mitochondrial proteome by AFG3L2. Also acts as a regulator of mitochondrial glutathione homeostasis by mediating cleavage and degradation of SLC25A39. SLC25A39 cleavage is prevented when SLC25A39 binds iron-sulfur. Involved in the regulation of OMA1-dependent processing of OPA1. May act by mediating processing of OMA1 precursor, participating in OMA1 maturation. This Homo sapiens (Human) protein is Mitochondrial inner membrane m-AAA protease component AFG3L2.